A 681-amino-acid chain; its full sequence is Hydroxyproline O-galactosyltransferase GALT6 (681 aa).

The Cytoplasmic segment spans residues 1-28; that stretch reads MRKPKLSKLERLEKFDIFVSLSKQRSVQ. A helical; Signal-anchor for type II membrane protein transmembrane segment spans residues 29–49; sequence ILMAVGLLYMLLITFEIPFVF. Topologically, residues 50 to 681 are lumenal; it reads KTGLSSLSQD…TGKPQCCNMR (632 aa). A disordered region spans residues 57–80; sequence SQDPLTRPEKHNSQRELQERRAPT. Residues 62–78 show a composition bias toward basic and acidic residues; sequence TRPEKHNSQRELQERRA. Residues 187 to 401 form the Galectin domain; it reads NIMELPCGLT…DIDVHSVFAG (215 aa). N629 is a glycosylation site (N-linked (GlcNAc...) asparagine).

The protein belongs to the glycosyltransferase 31 family. Mn(2+) serves as cofactor. Expressed in junveile leaves and stems, and at lower levels in cauline leaves and siliques.

The protein resides in the golgi apparatus membrane. The protein operates within protein modification; protein glycosylation. Functionally, possesses hydroxyproline O-galactosyltransferase activity. Transfers galactose from UDP-galactose to hydroxyproline residues in the arabinogalactan proteins (AGPs). Is specific for AGPs containing non-contiguous peptidyl hydroxyproline residues. Utilizes UDP-galactose solely as sugar donor. The addition of galactose onto the peptidyl hydroxyproline residues in AGP core proteins represents the first committed step in arabinogalactan polysaccharide addition. AGP glycans play essential roles in both vegetative and reproductive plant growth. The sequence is that of Hydroxyproline O-galactosyltransferase GALT6 from Arabidopsis thaliana (Mouse-ear cress).